The chain runs to 557 residues: MALSTFKREHIKKNLRNDEYDLVIIGGGITGAGIALDASERGMKVALVEMQDFAQGTSSRSTKLVHGGLRYLKQFQIGVVAETGKERAIVYENGPHVTTPEWMLLPMHKGGTFGKFSTSIGLGMYDRLAGVKKSERKKMLSKKETLAKEPLVKKEGLKGGGYYVEYRTDDARLTIEVMKRAAEKGAEIINYTKSEHFTYDKNQQVNGVNVIDKLTNENYTIKAKKVVNAAGPWVDDVRSGDYARNNKKLRLTKGVHVVIDQSKFPLGQAVYFDTEKDGRMIFAIPREGKAYVGTTDTFYDNIKSSPLTTQEDRDYLIDAINYMFPSVNVTDEDIESTWAGIRPLIYEEGKDPSEISRKDEIWEGKSGLLTIAGGKLTGYRHMAQDIVDLVSKRLKKDYGLTFSPCNTKGLAISGGDVGGSKNFDAFVEQKVDVAKGFGIDEDVARRLASKYGSNVDELFNIAQTSQYHDSKLPLEIYVELVYSIQQEMVYKPNDFLVRRSGKMYFNIKDVLDYKDSIIDIMADMLDYSPAQIEAYTEEVEQAIKEAQHGNNQPAVKE.

21–49 (DLVIIGGGITGAGIALDASERGMKVALVE) is an FAD binding site.

Belongs to the FAD-dependent glycerol-3-phosphate dehydrogenase family. The cofactor is FAD.

The protein localises to the cytoplasm. The enzyme catalyses a quinone + sn-glycerol 3-phosphate = dihydroxyacetone phosphate + a quinol. It participates in polyol metabolism; glycerol degradation via glycerol kinase pathway; glycerone phosphate from sn-glycerol 3-phosphate (aerobic route): step 1/1. The sequence is that of Aerobic glycerol-3-phosphate dehydrogenase (glpD) from Staphylococcus aureus (strain MRSA252).